Here is a 663-residue protein sequence, read N- to C-terminus: Bifunctional polymyxin resistance protein ArnA (663 aa).

Residues 1–307 (MSPKAVVFAY…EFGLVEGSQL (307 aa)) form a formyltransferase ArnAFT region. The Proton donor; for formyltransferase activity role is filled by His106. (6R)-10-formyltetrahydrofolate-binding positions include Arg116 and 138–142 (VKRAD). The segment at 317–663 (RRTRVLILGV…EAMAEKADMR (347 aa)) is dehydrogenase ArnADH. Residues Asp350 and 371–372 (DI) each bind NAD(+). Residues Ala396, Tyr401, and 435–436 (TS) contribute to the UDP-alpha-D-glucuronate site. Catalysis depends on Glu437, which acts as the Proton acceptor; for decarboxylase activity. Residues Arg463, Asn494, 528–537 (RLVDGGAQKR), and Tyr615 each bind UDP-alpha-D-glucuronate. Residue Arg621 is the Proton donor; for decarboxylase activity of the active site.

In the N-terminal section; belongs to the Fmt family. UDP-L-Ara4N formyltransferase subfamily. The protein in the C-terminal section; belongs to the NAD(P)-dependent epimerase/dehydratase family. UDP-glucuronic acid decarboxylase subfamily. Homohexamer, formed by a dimer of trimers.

It carries out the reaction UDP-alpha-D-glucuronate + NAD(+) = UDP-beta-L-threo-pentopyranos-4-ulose + CO2 + NADH. It catalyses the reaction UDP-4-amino-4-deoxy-beta-L-arabinose + (6R)-10-formyltetrahydrofolate = UDP-4-deoxy-4-formamido-beta-L-arabinose + (6S)-5,6,7,8-tetrahydrofolate + H(+). It participates in nucleotide-sugar biosynthesis; UDP-4-deoxy-4-formamido-beta-L-arabinose biosynthesis; UDP-4-deoxy-4-formamido-beta-L-arabinose from UDP-alpha-D-glucuronate: step 1/3. It functions in the pathway nucleotide-sugar biosynthesis; UDP-4-deoxy-4-formamido-beta-L-arabinose biosynthesis; UDP-4-deoxy-4-formamido-beta-L-arabinose from UDP-alpha-D-glucuronate: step 3/3. Its pathway is bacterial outer membrane biogenesis; lipopolysaccharide biosynthesis. Bifunctional enzyme that catalyzes the oxidative decarboxylation of UDP-glucuronic acid (UDP-GlcUA) to UDP-4-keto-arabinose (UDP-Ara4O) and the addition of a formyl group to UDP-4-amino-4-deoxy-L-arabinose (UDP-L-Ara4N) to form UDP-L-4-formamido-arabinose (UDP-L-Ara4FN). The modified arabinose is attached to lipid A and is required for resistance to polymyxin and cationic antimicrobial peptides. The polypeptide is Bifunctional polymyxin resistance protein ArnA (Pseudomonas savastanoi pv. phaseolicola (strain 1448A / Race 6) (Pseudomonas syringae pv. phaseolicola (strain 1448A / Race 6))).